A 189-amino-acid chain; its full sequence is dCTP deaminase, dUMP-forming (189 aa).

DCTP is bound by residues 101–106 (KSSLGR), aspartate 119, 127–129 (TLE), glutamine 148, tyrosine 162, and glutamine 174. Glutamate 129 acts as the Proton donor/acceptor in catalysis.

Belongs to the dCTP deaminase family. In terms of assembly, homotrimer.

The enzyme catalyses dCTP + 2 H2O = dUMP + NH4(+) + diphosphate. It participates in pyrimidine metabolism; dUMP biosynthesis; dUMP from dCTP: step 1/1. Its function is as follows. Bifunctional enzyme that catalyzes both the deamination of dCTP to dUTP and the hydrolysis of dUTP to dUMP without releasing the toxic dUTP intermediate. This chain is dCTP deaminase, dUMP-forming, found in Rhodococcus jostii (strain RHA1).